A 307-amino-acid chain; its full sequence is Type 2A encapsulin shell protein (307 aa).

It belongs to the encapsulin family. Family 2A subfamily. Homooligomeric. The encapsulin nanocompartment is formed by 60 subunits; monomers form pentamers which assemble to form shells. There are 12 charged pores where the pentamers meet as well as 3-fold axis channels and dimer channels. Post-translationally, the N-terminus is blocked.

Its subcellular location is the encapsulin nanocompartment. It localises to the cytoplasm. The protein resides in the cytosol. It is found in the cell membrane. In terms of biological role, shell component of a type 2A encapsulin nanocompartment. Forms encapsulin nanocompartments about 24 nm in diameter from 60 monomers. Probably encapsulates at least cysteine desulfurase (CyD, AC O32975) and allows passage of cysteine into its interior, probably involved in sulfur metabolism. Expression in M.smegmatis generates a multimeric protein, whereas expression in E.coli does not. The protein is Type 2A encapsulin shell protein of Mycobacterium leprae (strain TN).